Reading from the N-terminus, the 470-residue chain is Velvet complex subunit B (470 aa).

2 disordered regions span residues 1-148 (MNSS…EEGT) and 223-321 (VRSS…NPLF). A compositionally biased stretch (low complexity) spans 15 to 37 (PGPGYSSSVPPPIHAYQQQQQHQ). Positions 38–49 (HPPPSLLPPPPT) are enriched in pro residues. Basic residues predominate over residues 74 to 86 (HQHHAPPPPHHHS). Residues 102–124 (NQYPRPHPLPPSRNDEPPPPSSE) are compositionally biased toward pro residues. The region spanning 147-452 (GTGLKYSLDV…ALQGIKIPIR (306 aa)) is the Velvet domain. The span at 232-241 (GASSNNYSYS) shows a compositional bias: low complexity. Residues 242–255 (TLEPSTPSYQQQAL) show a composition bias toward polar residues. The segment covering 280–301 (QQGYGQAPSYQSSSSYGPPQQY) has biased composition (low complexity). A compositionally biased stretch (polar residues) spans 307-318 (GYNTDPPASSAN).

Belongs to the velvet family. VelB subfamily. In terms of assembly, component of the heterotrimeric velvet complex composed of laeA, veA and velB; VeA acting as a bridging protein between laeA and velB. Forms a heterodimeric complex with vosA; the formation of the velB-vosA complex is light-dependent.

The protein localises to the nucleus. It localises to the cytoplasm. Its function is as follows. Component of the velvet transcription factor complex that controls sexual/asexual developmental ratio in response to light, promoting sexual development in the darkness while stimulating asexual sporulation under illumination. The velvet complex acts as a global regulator for secondary metabolite gene expression. Component of the velB-VosA heterodimeric complex that plays a dual role in activating genes associated with spore maturation and repressing certain development-associated genes. The complex binds DNA through the DNA-binding domain of vosA that recognizes an 11-nucleotide consensus sequence 5'-CTGGCCGCGGC-3' consisting of two motifs in the promoters of key developmental regulatory genes. Controls the expression of the pink pigment aurofusarin and the mycotoxin deoxynivalenol gene clusters. Regulates hyphae formation, hyphal hydrophobicity and conidiation. Regulates of cell wall integrity and pathogenicity. In Gibberella zeae (strain ATCC MYA-4620 / CBS 123657 / FGSC 9075 / NRRL 31084 / PH-1) (Wheat head blight fungus), this protein is Velvet complex subunit B.